The sequence spans 1499 residues: Autophagy-related protein 2 (1499 aa).

A compositionally biased stretch (polar residues) spans 211 to 221 (EQSVPSYGSSS). A disordered region spans residues 211 to 237 (EQSVPSYGSSSSDKEDDNTSDSEDPLS). Acidic residues predominate over residues 224-234 (KEDDNTSDSED).

This sequence belongs to the ATG2 family.

Its subcellular location is the preautophagosomal structure membrane. The protein resides in the endoplasmic reticulum membrane. It carries out the reaction a 1,2-diacyl-sn-glycero-3-phosphocholine(in) = a 1,2-diacyl-sn-glycero-3-phosphocholine(out). The catalysed reaction is a 1,2-diacyl-sn-glycero-3-phospho-L-serine(in) = a 1,2-diacyl-sn-glycero-3-phospho-L-serine(out). It catalyses the reaction a 1,2-diacyl-sn-glycero-3-phosphoethanolamine(in) = a 1,2-diacyl-sn-glycero-3-phosphoethanolamine(out). In terms of biological role, lipid transfer protein required for autophagosome completion and peroxisome degradation. Tethers the edge of the isolation membrane (IM) to the endoplasmic reticulum (ER) and mediates direct lipid transfer from ER to IM for IM expansion. ATG2 binds to the ER exit site (ERES), which is the membrane source for autophagosome formation, using basic residues in its N-terminal region (NR) and to the expanding edge of the IM through its C-terminal region. The latter binding is assisted by an ATG18-PtdIns3P interaction. ATG2 then extracts phospholipids from the membrane source using its NR and transfers them to ATG9 to the IM through its predicted beta-sheet-rich structure for membrane expansion. This is Autophagy-related protein 2 from Kluyveromyces marxianus (strain DMKU3-1042 / BCC 29191 / NBRC 104275) (Yeast).